A 206-amino-acid chain; its full sequence is Endoribonuclease YbeY (206 aa).

The segment at 1–20 (MSQANHNDTHNNIDDNINNH) is disordered. H168, H172, and H178 together coordinate Zn(2+).

It belongs to the endoribonuclease YbeY family. Requires Zn(2+) as cofactor.

It is found in the cytoplasm. Functionally, single strand-specific metallo-endoribonuclease involved in late-stage 70S ribosome quality control and in maturation of the 3' terminus of the 16S rRNA. The sequence is that of Endoribonuclease YbeY from Psychrobacter arcticus (strain DSM 17307 / VKM B-2377 / 273-4).